Reading from the N-terminus, the 174-residue chain is ATP-dependent protease subunit HslV (174 aa).

T2 is an active-site residue. G157, C160, and T163 together coordinate Na(+).

Belongs to the peptidase T1B family. HslV subfamily. As to quaternary structure, a double ring-shaped homohexamer of HslV is capped on each side by a ring-shaped HslU homohexamer. The assembly of the HslU/HslV complex is dependent on binding of ATP.

It is found in the cytoplasm. It catalyses the reaction ATP-dependent cleavage of peptide bonds with broad specificity.. With respect to regulation, allosterically activated by HslU binding. Functionally, protease subunit of a proteasome-like degradation complex believed to be a general protein degrading machinery. This Shewanella oneidensis (strain ATCC 700550 / JCM 31522 / CIP 106686 / LMG 19005 / NCIMB 14063 / MR-1) protein is ATP-dependent protease subunit HslV.